We begin with the raw amino-acid sequence, 97 residues long: YcgL domain-containing protein CKO_01183 (97 aa).

In terms of domain architecture, YcgL spans 1-85 (MFCVIYRSSK…PPEDLLKQHL (85 aa)). The interval 74–97 (PPPPEDLLKQHLSAPGENKPDAKS) is disordered.

This chain is YcgL domain-containing protein CKO_01183, found in Citrobacter koseri (strain ATCC BAA-895 / CDC 4225-83 / SGSC4696).